The chain runs to 647 residues: Starch synthase 1, chloroplastic/amyloplastic (647 aa).

Residues 1–41 (MAATGVGAGCLAPSVRLRADPATAARASACVVRARLRRVAR) constitute a chloroplast transit peptide. The span at 66–91 (PLVPGFLAPPPPAPAQSPAPTQPPLP) shows a compositional bias: pro residues. The segment at 66-95 (PLVPGFLAPPPPAPAQSPAPTQPPLPDAGV) is disordered. ADP-alpha-D-glucose is bound at residue Lys153.

The protein belongs to the glycosyltransferase 1 family. Bacterial/plant glycogen synthase subfamily.

The protein resides in the plastid. It localises to the chloroplast. The protein localises to the amyloplast. It carries out the reaction [(1-&gt;4)-alpha-D-glucosyl](n) + ADP-alpha-D-glucose = [(1-&gt;4)-alpha-D-glucosyl](n+1) + ADP + H(+). Its pathway is glycan biosynthesis; starch biosynthesis. The sequence is that of Starch synthase 1, chloroplastic/amyloplastic (WSSI-2) from Triticum aestivum (Wheat).